We begin with the raw amino-acid sequence, 657 residues long: Glycogen debranching enzyme (657 aa).

The active-site Nucleophile is Asp336. Residue Glu371 is the Proton donor of the active site. The segment covering 458–467 (NEANGEENRD) has biased composition (basic and acidic residues). Positions 458–479 (NEANGEENRDGTNNNYSNNHGK) are disordered.

It belongs to the glycosyl hydrolase 13 family.

The catalysed reaction is Hydrolysis of (1-&gt;6)-alpha-D-glucosidic linkages to branches with degrees of polymerization of three or four glucose residues in limit dextrin.. It participates in glycan degradation; glycogen degradation. Removes maltotriose and maltotetraose chains that are attached by 1,6-alpha-linkage to the limit dextrin main chain, generating a debranched limit dextrin. This Escherichia coli O139:H28 (strain E24377A / ETEC) protein is Glycogen debranching enzyme.